The chain runs to 717 residues: Adhesion cell surface protein MAD1 (717 aa).

The first 19 residues, 1-19, serve as a signal peptide directing secretion; sequence MKSALSVVVAAAGVQQASA. Composition is skewed to low complexity over residues 237 to 254 and 262 to 274; these read TPVT…QTTT and SKET…QTTP. Disordered regions lie at residues 237-392 and 451-506; these read TPVT…ATTT and RTQS…TPPC. Tandem repeats lie at residues 275 to 286, 287 to 298, 299 to 310, 311 to 328, 329 to 340, 341 to 352, 353 to 364, and 365 to 376. Residues 275–366 show a composition bias toward polar residues; that stretch reads GKETTPAQQT…TPAQQTTPGK (92 aa). Low complexity-rich tracts occupy residues 368 to 392 and 484 to 503; these read TTPA…ATTT and QPTG…STQT. The CFEM domain maps to 481 to 595; it reads TPEQPTGEKP…TQIITVTGTP (115 aa). Intrachain disulfides connect Cys-513–Cys-546, Cys-524–Cys-532, and Cys-534–Cys-568. Residue Asp-529 coordinates heme. A glycan (N-linked (GlcNAc...) asparagine) is linked at Asn-614. The tract at residues 632–690 is disordered; sequence PTPTGGVPNQPPATASVPAGQNPPPVTGQNPPPAVTDQSPPPAITTGTGGVIPPKPTGS. Residues 652 to 674 are compositionally biased toward pro residues; that stretch reads QNPPPVTGQNPPPAVTDQSPPPA. Residue Ala-695 is the site of GPI-anchor amidated alanine attachment. A propeptide spans 696–717 (removed in mature form); the sequence is GSGRVGAGLGMVLAVAAFVAAL.

Belongs to the RBT5 family. In terms of processing, the GPI-anchor is attached to the protein in the endoplasmic reticulum and serves to target the protein to the cell surface. There, the glucosamine-inositol phospholipid moiety is cleaved off and the GPI-modified mannoprotein is covalently attached via its lipidless GPI glycan remnant to the 1,6-beta-glucan of the outer cell wall layer.

It localises to the secreted. The protein localises to the cell wall. The protein resides in the cell membrane. In terms of biological role, cell surface adhesion protein that plays a key role in virulence by allowing adherence to the insect host surface. Required to orientate the cytoskeleton and stimulate the expression of genes involved in the cell cycle. Is also involved in achieving the septin hourglass shape and subsequent separation of cells. This chain is Adhesion cell surface protein MAD1, found in Metarhizium anisopliae (Entomophthora anisopliae).